Here is a 163-residue protein sequence, read N- to C-terminus: Photosystem II extrinsic protein V (163 aa).

The first 26 residues, 1-26, serve as a signal peptide directing secretion; that stretch reads MFKKSYQFFALVLFSIFNVLVTSASA. Positions 63, 66, 67, and 118 each coordinate heme c.

This sequence belongs to the cytochrome c family. PsbV subfamily. As to quaternary structure, PSII is composed of 1 copy each of membrane proteins PsbA, PsbB, PsbC, PsbD, PsbE, PsbF, PsbH, PsbI, PsbJ, PsbK, PsbL, PsbM, PsbT, PsbY, PsbZ, Psb30/Ycf12, at least 3 peripheral proteins of the oxygen-evolving complex and a large number of cofactors. It forms dimeric complexes. Requires heme c as cofactor.

The protein resides in the plastid. Its subcellular location is the chloroplast thylakoid membrane. One of the extrinsic, lumenal subunits of photosystem II (PSII). PSII is a light-driven water plastoquinone oxidoreductase, using light energy to abstract electrons from H(2)O, generating a proton gradient subsequently used for ATP formation. The extrinsic proteins stabilize the structure of photosystem II oxygen-evolving complex (OEC), the ion environment of oxygen evolution and protect the OEC against heat-induced inactivation. This Trieres chinensis (Marine centric diatom) protein is Photosystem II extrinsic protein V.